A 156-amino-acid polypeptide reads, in one-letter code: Small ribosomal subunit protein uS7 (156 aa).

The protein belongs to the universal ribosomal protein uS7 family. Part of the 30S ribosomal subunit. Contacts proteins S9 and S11.

One of the primary rRNA binding proteins, it binds directly to 16S rRNA where it nucleates assembly of the head domain of the 30S subunit. Is located at the subunit interface close to the decoding center, probably blocks exit of the E-site tRNA. This Lawsonia intracellularis (strain PHE/MN1-00) protein is Small ribosomal subunit protein uS7.